The following is a 62-amino-acid chain: Disintegrin atropoimin (62 aa).

Residues 1–62 (EAGEECDCGT…ADCPRNGLYG (62 aa)) enclose the Disintegrin domain. 5 cysteine pairs are disulfide-bonded: Cys-6–Cys-21, Cys-8–Cys-16, Cys-15–Cys-38, Cys-29–Cys-35, and Cys-34–Cys-48. The short motif at 41–42 (GD) is the Cell attachment site element.

It belongs to the venom metalloproteinase (M12B) family. P-II subfamily. P-IIa sub-subfamily. In terms of assembly, monomer. Expressed by the venom gland.

It localises to the secreted. Inhibits ADP- (IC(50)=63 nM) and collagen-induced (IC(50)=53 nM) aggregation of human platelets. In vitro, inhibits adhesion of endothelial cells to vitronectin, type-I collagen and, to a lower degree, fibronectin and laminin. In Metlapilcoatlus mexicanus (Central American jumping pitviper), this protein is Disintegrin atropoimin.